A 142-amino-acid chain; its full sequence is MADPARARKLADRIKVIVAERLDRGLRDPRLGFVTITDVQVTGDLQHATVFYTVYGTDQERADTAAALTAATGMLRSEVGKNITARLTPTLQFQLDAIPENAAHIEDLLRQARDHDTEVAGLAEGAAYAGEQDPYVKPREAN.

Belongs to the RbfA family. In terms of assembly, monomer. Binds 30S ribosomal subunits, but not 50S ribosomal subunits or 70S ribosomes.

It is found in the cytoplasm. Its function is as follows. One of several proteins that assist in the late maturation steps of the functional core of the 30S ribosomal subunit. Associates with free 30S ribosomal subunits (but not with 30S subunits that are part of 70S ribosomes or polysomes). Required for efficient processing of 16S rRNA. May interact with the 5'-terminal helix region of 16S rRNA. The sequence is that of Ribosome-binding factor A from Leifsonia xyli subsp. xyli (strain CTCB07).